We begin with the raw amino-acid sequence, 249 residues long: 2,3-bisphosphoglycerate-dependent phosphoglycerate mutase (249 aa).

Substrate is bound by residues 9–16 (RHGQSQWN), 22–23 (TG), R61, 88–91 (ERHY), K99, 115–116 (RR), and 184–185 (GN). H10 acts as the Tele-phosphohistidine intermediate in catalysis. E88 acts as the Proton donor/acceptor in catalysis.

This sequence belongs to the phosphoglycerate mutase family. BPG-dependent PGAM subfamily. In terms of assembly, homodimer.

The enzyme catalyses (2R)-2-phosphoglycerate = (2R)-3-phosphoglycerate. The protein operates within carbohydrate degradation; glycolysis; pyruvate from D-glyceraldehyde 3-phosphate: step 3/5. Catalyzes the interconversion of 2-phosphoglycerate and 3-phosphoglycerate. The sequence is that of 2,3-bisphosphoglycerate-dependent phosphoglycerate mutase from Xanthomonas axonopodis pv. citri (strain 306).